Reading from the N-terminus, the 245-residue chain is Nisin immunity protein (245 aa).

Residues methionine 1–glycine 19 form the signal peptide. Cysteine 20 carries the N-palmitoyl cysteine lipid modification. Cysteine 20 carries the S-diacylglycerol cysteine lipid modification.

It localises to the cell membrane. Involved in immunity against exogenously supplied nisin. This Lactococcus lactis subsp. lactis (Streptococcus lactis) protein is Nisin immunity protein (nisI).